The chain runs to 109 residues: U4-lycotoxin-Ls1a (109 aa).

A signal peptide spans 1-22; that stretch reads MKVLVLFSVLFLTLFSYSSTEA. Residues 23–44 constitute a propeptide that is removed on maturation; sequence IDEFDSDAEDDMLSLMANEQVR. Residues 45 to 88 form a knottin domain region; sequence AKACTPRLHDCSHDRHSCCRGELFKDVCYCFYPEGEDKTEVCSC. Cystine bridges form between C48/C63, C55/C72, C62/C88, and C74/C86. Positions 89 to 108 are linear cationic cytotoxin domain; sequence QQPKSHKYIEKVVDKAKTVV.

This sequence belongs to the neurotoxin 19 (CSTX) family. 05 (U4-Lctx) subfamily. In terms of tissue distribution, expressed by the venom gland.

It localises to the secreted. Functionally, enhances the high-affinity desensitization of human P2RX3 purinoceptors. In Lycosa singoriensis (Wolf spider), this protein is U4-lycotoxin-Ls1a.